Here is a 139-residue protein sequence, read N- to C-terminus: Large ribosomal subunit protein uL13 (139 aa).

The protein belongs to the universal ribosomal protein uL13 family. Part of the 50S ribosomal subunit.

Functionally, this protein is one of the early assembly proteins of the 50S ribosomal subunit, although it is not seen to bind rRNA by itself. It is important during the early stages of 50S assembly. This chain is Large ribosomal subunit protein uL13, found in Methanococcoides burtonii (strain DSM 6242 / NBRC 107633 / OCM 468 / ACE-M).